The primary structure comprises 205 residues: Urease accessory protein UreE (205 aa).

The segment covering 178-196 (AHFHAGGHGHVHSGHGHGG) has biased composition (basic residues). The segment at 178-205 (AHFHAGGHGHVHSGHGHGGKHGEHDAES) is disordered.

Belongs to the UreE family.

It is found in the cytoplasm. Involved in urease metallocenter assembly. Binds nickel. Probably functions as a nickel donor during metallocenter assembly. The chain is Urease accessory protein UreE from Bordetella pertussis (strain Tohama I / ATCC BAA-589 / NCTC 13251).